We begin with the raw amino-acid sequence, 212 residues long: Probable GTP-binding protein EngB (212 aa).

Residues 23 to 197 (TGIEVAFAGR…ERILDGWFGL (175 aa)) enclose the EngB-type G domain. Residues 31–38 (GRSNAGKS), 58–62 (GRTQL), 76–79 (DLPG), 143–146 (TKAD), and 176–178 (FSS) contribute to the GTP site. Positions 38 and 60 each coordinate Mg(2+).

Belongs to the TRAFAC class TrmE-Era-EngA-EngB-Septin-like GTPase superfamily. EngB GTPase family. Requires Mg(2+) as cofactor.

Its function is as follows. Necessary for normal cell division and for the maintenance of normal septation. This chain is Probable GTP-binding protein EngB, found in Alteromonas mediterranea (strain DSM 17117 / CIP 110805 / LMG 28347 / Deep ecotype).